Consider the following 316-residue polypeptide: UPF0725 protein At1g02770 (316 aa).

Belongs to the UPF0725 (EMB2204) family.

The protein is UPF0725 protein At1g02770 of Arabidopsis thaliana (Mouse-ear cress).